Reading from the N-terminus, the 428-residue chain is tRNA(Ile)-lysidine synthase (428 aa).

28–33 (SGGVDS) is an ATP binding site.

Belongs to the tRNA(Ile)-lysidine synthase family.

The protein localises to the cytoplasm. The enzyme catalyses cytidine(34) in tRNA(Ile2) + L-lysine + ATP = lysidine(34) in tRNA(Ile2) + AMP + diphosphate + H(+). Ligates lysine onto the cytidine present at position 34 of the AUA codon-specific tRNA(Ile) that contains the anticodon CAU, in an ATP-dependent manner. Cytidine is converted to lysidine, thus changing the amino acid specificity of the tRNA from methionine to isoleucine. The polypeptide is tRNA(Ile)-lysidine synthase (Streptococcus pyogenes serotype M1).